Consider the following 263-residue polypeptide: N-acyl homoserine lactonase AttM (263 aa).

Histidine 103, histidine 105, aspartate 107, histidine 108, histidine 180, aspartate 202, and histidine 247 together coordinate Zn(2+).

Belongs to the metallo-beta-lactamase superfamily. Zn(2+) serves as cofactor.

It carries out the reaction an N-acyl-L-homoserine lactone + H2O = an N-acyl-L-homoserine + H(+). This Agrobacterium fabrum (strain C58 / ATCC 33970) (Agrobacterium tumefaciens (strain C58)) protein is N-acyl homoserine lactonase AttM.